Consider the following 361-residue polypeptide: MKNLFLFCRAGYEKECAAEIQQRAAELNVGGFVKTNNNDAYVVYQCFEDDGADTLVKQLPLDSLIFARQMFAASELLADLPESDRVSPIVAALSEVSKAGELRVETPDTNEAKELSAFCRKFTVPLRQHLKKSGSLLAQENPKRPIIHVCFIGPGRAYAGYSLSNNSSPNFMGIPRLKMAADAPSRSSLKLDEAFAQFVPKEEQEERVRSGMNAVDLGACPGGWTYQLVRRGMFVSAVDNGPMNEKLMETGQVKHFREDGFRFEPQRKNIYWLVCDMVEKPARVAELIEAWAINGWFKEAIFNLKLPMKSRYKEVMAILNTMQDILKENGITEFKLQCKHLYHDRDEVTVHLWLKPSQPWN.

Residues Ser-187, Cys-220–Gly-223, Asp-239, Asp-259, and Asp-276 each bind S-adenosyl-L-methionine. Lys-305 functions as the Proton acceptor in the catalytic mechanism.

It belongs to the class I-like SAM-binding methyltransferase superfamily. RNA methyltransferase RlmE family. RlmM subfamily. In terms of assembly, monomer.

It localises to the cytoplasm. The enzyme catalyses cytidine(2498) in 23S rRNA + S-adenosyl-L-methionine = 2'-O-methylcytidine(2498) in 23S rRNA + S-adenosyl-L-homocysteine + H(+). Its function is as follows. Catalyzes the 2'-O-methylation at nucleotide C2498 in 23S rRNA. This chain is Ribosomal RNA large subunit methyltransferase M, found in Shewanella oneidensis (strain ATCC 700550 / JCM 31522 / CIP 106686 / LMG 19005 / NCIMB 14063 / MR-1).